Reading from the N-terminus, the 266-residue chain is Dihydropteroate synthase (266 aa).

The region spanning 12-260 (AAIMGILNVT…DVKANQDIVA (249 aa)) is the Pterin-binding domain. N19 is a binding site for Mg(2+). (7,8-dihydropterin-6-yl)methyl diphosphate is bound by residues T59, D93, N112, D176, K212, and 248 to 250 (RVH).

This sequence belongs to the DHPS family. Homodimer or homotrimer. Mg(2+) is required as a cofactor.

The enzyme catalyses (7,8-dihydropterin-6-yl)methyl diphosphate + 4-aminobenzoate = 7,8-dihydropteroate + diphosphate. The protein operates within cofactor biosynthesis; tetrahydrofolate biosynthesis; 7,8-dihydrofolate from 2-amino-4-hydroxy-6-hydroxymethyl-7,8-dihydropteridine diphosphate and 4-aminobenzoate: step 1/2. In terms of biological role, catalyzes the condensation of para-aminobenzoate (pABA) with 6-hydroxymethyl-7,8-dihydropterin diphosphate (DHPt-PP) to form 7,8-dihydropteroate (H2Pte), the immediate precursor of folate derivatives. This Streptococcus pyogenes serotype M18 (strain MGAS8232) protein is Dihydropteroate synthase (folP).